Reading from the N-terminus, the 308-residue chain is Ornithine carbamoyltransferase (308 aa).

Carbamoyl phosphate contacts are provided by residues 53-56, Gln80, Arg104, and 131-134; these read STRT and HPCQ. L-ornithine-binding positions include Asn162, Asp225, and 229-230; that span reads SM. Carbamoyl phosphate contacts are provided by residues 265–266 and Arg293; that span reads CL.

Belongs to the aspartate/ornithine carbamoyltransferase superfamily. OTCase family.

It is found in the cytoplasm. It carries out the reaction carbamoyl phosphate + L-ornithine = L-citrulline + phosphate + H(+). The protein operates within amino-acid biosynthesis; L-arginine biosynthesis; L-arginine from L-ornithine and carbamoyl phosphate: step 1/3. Reversibly catalyzes the transfer of the carbamoyl group from carbamoyl phosphate (CP) to the N(epsilon) atom of ornithine (ORN) to produce L-citrulline. This is Ornithine carbamoyltransferase (argF) from Synechocystis sp. (strain ATCC 27184 / PCC 6803 / Kazusa).